A 203-amino-acid polypeptide reads, in one-letter code: uncharacterized protein (203 aa).

The segment at 174–203 (LASSKNPRARSPGLDPLGSSETLWSHRGGH) is disordered.

This is an uncharacterized protein from Homo sapiens (Human).